Here is a 224-residue protein sequence, read N- to C-terminus: UPF0758 protein Psyr_0222 (224 aa).

The MPN domain occupies 102-224 (ALENPTQVRS…PLSMVERGLM (123 aa)). Zn(2+)-binding residues include histidine 173, histidine 175, and aspartate 186. A JAMM motif motif is present at residues 173–186 (HNHPSGITTPSRSD).

This sequence belongs to the UPF0758 family.

In Pseudomonas syringae pv. syringae (strain B728a), this protein is UPF0758 protein Psyr_0222.